We begin with the raw amino-acid sequence, 20 residues long: C-reactive protein (20 aa).

The 20-residue stretch at 1-20 (SPVAASYRATAGLAGKALDF) folds into the Pentraxin (PTX) domain.

It belongs to the pentraxin family. In terms of assembly, homodimer; disulfide-linked. It is not known if it assembles into a pentraxin (or pentaxin) structure. Pentraxins have a discoid arrangement of 5 non-covalently bound subunits. In terms of processing, glycosylated.

Its subcellular location is the secreted. Displays several functions associated with host defense: it promotes agglutination, bacterial capsular swelling, phagocytosis, and complement fixation through its calcium-dependent binding to phosphorylcholine. In Mustelus canis (Smooth dogfish), this protein is C-reactive protein.